The primary structure comprises 204 residues: Thiamine-phosphate synthase (204 aa).

4-amino-2-methyl-5-(diphosphooxymethyl)pyrimidine-binding positions include 35–39 (QVREK) and N67. The Mg(2+) site is built by D68 and D87. S106 provides a ligand contact to 4-amino-2-methyl-5-(diphosphooxymethyl)pyrimidine. Residue 132–134 (TPT) participates in 2-[(2R,5Z)-2-carboxy-4-methylthiazol-5(2H)-ylidene]ethyl phosphate binding. A 4-amino-2-methyl-5-(diphosphooxymethyl)pyrimidine-binding site is contributed by K135. 2-[(2R,5Z)-2-carboxy-4-methylthiazol-5(2H)-ylidene]ethyl phosphate is bound by residues G163 and 183 to 184 (VS).

Belongs to the thiamine-phosphate synthase family. It depends on Mg(2+) as a cofactor.

It carries out the reaction 2-[(2R,5Z)-2-carboxy-4-methylthiazol-5(2H)-ylidene]ethyl phosphate + 4-amino-2-methyl-5-(diphosphooxymethyl)pyrimidine + 2 H(+) = thiamine phosphate + CO2 + diphosphate. It catalyses the reaction 2-(2-carboxy-4-methylthiazol-5-yl)ethyl phosphate + 4-amino-2-methyl-5-(diphosphooxymethyl)pyrimidine + 2 H(+) = thiamine phosphate + CO2 + diphosphate. The enzyme catalyses 4-methyl-5-(2-phosphooxyethyl)-thiazole + 4-amino-2-methyl-5-(diphosphooxymethyl)pyrimidine + H(+) = thiamine phosphate + diphosphate. It participates in cofactor biosynthesis; thiamine diphosphate biosynthesis; thiamine phosphate from 4-amino-2-methyl-5-diphosphomethylpyrimidine and 4-methyl-5-(2-phosphoethyl)-thiazole: step 1/1. Condenses 4-methyl-5-(beta-hydroxyethyl)thiazole monophosphate (THZ-P) and 2-methyl-4-amino-5-hydroxymethyl pyrimidine pyrophosphate (HMP-PP) to form thiamine monophosphate (TMP). The sequence is that of Thiamine-phosphate synthase from Vibrio parahaemolyticus serotype O3:K6 (strain RIMD 2210633).